We begin with the raw amino-acid sequence, 284 residues long: Phosphonates import ATP-binding protein PhnC 2 (284 aa).

Residues Ile5–Ala253 enclose the ABC transporter domain. Gly38–Ser45 serves as a coordination point for ATP.

The protein belongs to the ABC transporter superfamily. Phosphonates importer (TC 3.A.1.9.1) family. The complex is composed of two ATP-binding proteins (PhnC), two transmembrane proteins (PhnE) and a solute-binding protein (PhnD).

The protein resides in the cell inner membrane. The catalysed reaction is phosphonate(out) + ATP + H2O = phosphonate(in) + ADP + phosphate + H(+). Part of the ABC transporter complex PhnCDE involved in phosphonates import. Responsible for energy coupling to the transport system. The chain is Phosphonates import ATP-binding protein PhnC 2 from Cupriavidus necator (strain ATCC 17699 / DSM 428 / KCTC 22496 / NCIMB 10442 / H16 / Stanier 337) (Ralstonia eutropha).